The sequence spans 267 residues: Myb-related protein Hv1 (267 aa).

2 HTH myb-type domains span residues 9 to 61 and 62 to 116; these read KAHT…INYL and RPDL…RRKL. 2 DNA-binding regions (H-T-H motif) span residues 37 to 61 and 89 to 112; these read WRSL…INYL and WSLI…NTHI.

In terms of tissue distribution, germinating seed and apical meristem of shoot and root.

It is found in the nucleus. Possible transcription activator in response to an external signal. May be involved in the regulation of flavonoid biosynthesis. The chain is Myb-related protein Hv1 (MYB1) from Hordeum vulgare (Barley).